The following is a 692-amino-acid chain: Proprotein convertase subtilisin/kexin type 9 (692 aa).

A signal peptide spans 1-30; the sequence is MGTVSSRRSWWPLPLPLLLLLLLGPAGARA. Residues 31–152 constitute a propeptide that is removed on maturation; it reads QEDEDGDYEE…IEEDSSVFAQ (122 aa). Tyrosine 38 is subject to Sulfotyrosine. Serine 47 is subject to Phosphoserine. One can recognise an Inhibitor I9 domain in the interval 77-149; that stretch reads TYVVVLKEET…VDYIEEDSSV (73 aa). Residues 155 to 444 enclose the Peptidase S8 domain; it reads PWNLERITPA…VLTPNLVAAL (290 aa). Active-site charge relay system residues include aspartate 186 and histidine 226. Disulfide bonds link cysteine 223-cysteine 255 and cysteine 323-cysteine 358. Serine 386 functions as the Charge relay system in the catalytic mechanism. Residues 450-692 are C-terminal domain; sequence RAGWQLFCRT…HLVQASQELQ (243 aa). 3 disulfide bridges follow: cysteine 457–cysteine 527, cysteine 477–cysteine 526, and cysteine 486–cysteine 509. An N-linked (GlcNAc...) asparagine glycan is attached at asparagine 533. 6 disulfides stabilise this stretch: cysteine 534/cysteine 601, cysteine 552/cysteine 600, cysteine 562/cysteine 588, cysteine 608/cysteine 679, cysteine 626/cysteine 678, and cysteine 635/cysteine 654. Serine 688 carries the phosphoserine modification.

Belongs to the peptidase S8 family. Monomer. Can self-associate to form dimers and higher multimers which may have increased LDLR degrading activity. The precursor protein but not the mature protein may form multimers. Interacts with APOB, VLDLR, LRP8/APOER2 and BACE1. The full-length immature form (pro-PCSK9) interacts with SCNN1A, SCNN1B and SCNN1G. The pro-PCSK9 form (via C-terminal domain) interacts with LDLR. Interacts (via the C-terminal domain) with ANXA2 (via repeat Annexin 1); the interaction inhibits the degradation of LDLR. It depends on Ca(2+) as a cofactor. In terms of processing, cleavage by furin and PCSK5 generates a truncated inactive protein that is unable to induce LDLR degradation. Post-translationally, undergoes autocatalytic cleavage in the endoplasmic reticulum to release the propeptide from the N-terminus and the cleavage of the propeptide is strictly required for its maturation and activation. The cleaved propeptide however remains associated with the catalytic domain through non-covalent interactions, preventing potential substrates from accessing its active site. As a result, it is secreted from cells as a propeptide-containing, enzymatically inactive protein. Phosphorylation protects the propeptide against proteolysis.

Its subcellular location is the cytoplasm. The protein resides in the secreted. It is found in the endosome. It localises to the lysosome. The protein localises to the cell surface. Its subcellular location is the endoplasmic reticulum. The protein resides in the golgi apparatus. Its activity is regulated as follows. Its proteolytic activity is autoinhibited by the non-covalent binding of the propeptide to the catalytic domain. Inhibited by EGTA. Crucial player in the regulation of plasma cholesterol homeostasis. Binds to low-density lipid receptor family members: low density lipoprotein receptor (LDLR), very low density lipoprotein receptor (VLDLR), apolipoprotein E receptor (LRP1/APOER) and apolipoprotein receptor 2 (LRP8/APOER2), and promotes their degradation in intracellular acidic compartments. Acts via a non-proteolytic mechanism to enhance the degradation of the hepatic LDLR through a clathrin LDLRAP1/ARH-mediated pathway. May prevent the recycling of LDLR from endosomes to the cell surface or direct it to lysosomes for degradation. Can induce ubiquitination of LDLR leading to its subsequent degradation. Inhibits intracellular degradation of APOB via the autophagosome/lysosome pathway in a LDLR-independent manner. Involved in the disposal of non-acetylated intermediates of BACE1 in the early secretory pathway. Inhibits epithelial Na(+) channel (ENaC)-mediated Na(+) absorption by reducing ENaC surface expression primarily by increasing its proteasomal degradation. Regulates neuronal apoptosis via modulation of LRP8/APOER2 levels and related anti-apoptotic signaling pathways. This Macaca nemestrina (Pig-tailed macaque) protein is Proprotein convertase subtilisin/kexin type 9 (PCSK9).